The primary structure comprises 199 residues: Prefoldin subunit 3 (199 aa).

The residue at position 1 (M1) is an N-acetylmethionine.

The protein belongs to the prefoldin subunit alpha family. In terms of assembly, heterohexamer of two PFD-alpha type and four PFD-beta type subunits.

Binds specifically to cytosolic chaperonin (c-CPN) and transfers target proteins to it. Binds to nascent polypeptide chain and promotes folding in an environment in which there are many competing pathways for nonnative proteins. This is Prefoldin subunit 3 (PAC10) from Saccharomyces cerevisiae (strain ATCC 204508 / S288c) (Baker's yeast).